The primary structure comprises 285 residues: RNA polymerase sigma factor RpoH (285 aa).

The segment at 53-122 is sigma-70 factor domain-2; it reads LILSHLRFVV…IHEYVLRNWR (70 aa). The Interaction with polymerase core subunit RpoC motif lies at 77-80; it reads DLVQ. The segment at 229–280 is sigma-70 factor domain-4; that stretch reads ALASLDERSQHIVRSRWLDDDKATLQDLAEMYGVSAERIRQLEKNAMKKLKM. Positions 253-272 form a DNA-binding region, H-T-H motif; the sequence is LQDLAEMYGVSAERIRQLEK.

It belongs to the sigma-70 factor family. RpoH subfamily. Interacts with the RNA polymerase core enzyme.

The protein resides in the cytoplasm. In terms of biological role, sigma factors are initiation factors that promote the attachment of RNA polymerase to specific initiation sites and are then released. This sigma factor is involved in regulation of expression of heat shock genes. The chain is RNA polymerase sigma factor RpoH from Vibrio vulnificus (strain CMCP6).